A 57-amino-acid polypeptide reads, in one-letter code: uncharacterized protein (57 aa).

A coiled-coil region spans residues 9-45 (NWQEEIRKIIIERVRREAKKRLLEETRKLRMEMKSSK).

This is an uncharacterized protein from Archaeoglobus fulgidus (strain ATCC 49558 / DSM 4304 / JCM 9628 / NBRC 100126 / VC-16).